The sequence spans 699 residues: DNA ligase (699 aa).

Residues Met1–Arg20 form a disordered region. NAD(+)-binding positions include Asp43–Asp47, Ser92–Leu93, and Glu126. The active-site N6-AMP-lysine intermediate is the Lys128. Positions 149, 185, 301, and 325 each coordinate NAD(+). Cys419, Cys422, Cys443, and Cys449 together coordinate Zn(2+). The BRCT domain maps to Ala621–Glu699.

The protein belongs to the NAD-dependent DNA ligase family. LigA subfamily. It depends on Mg(2+) as a cofactor. The cofactor is Mn(2+).

The catalysed reaction is NAD(+) + (deoxyribonucleotide)n-3'-hydroxyl + 5'-phospho-(deoxyribonucleotide)m = (deoxyribonucleotide)n+m + AMP + beta-nicotinamide D-nucleotide.. Functionally, DNA ligase that catalyzes the formation of phosphodiester linkages between 5'-phosphoryl and 3'-hydroxyl groups in double-stranded DNA using NAD as a coenzyme and as the energy source for the reaction. It is essential for DNA replication and repair of damaged DNA. The polypeptide is DNA ligase (Beijerinckia indica subsp. indica (strain ATCC 9039 / DSM 1715 / NCIMB 8712)).